We begin with the raw amino-acid sequence, 330 residues long: Glucokinase (330 aa).

Belongs to the ROK (NagC/XylR) family.

It is found in the cytoplasm. The enzyme catalyses D-glucose + ATP = D-glucose 6-phosphate + ADP + H(+). This is Glucokinase (glcK) from Halalkalibacterium halodurans (strain ATCC BAA-125 / DSM 18197 / FERM 7344 / JCM 9153 / C-125) (Bacillus halodurans).